Reading from the N-terminus, the 371-residue chain is 4-hydroxy-3-methylbut-2-en-1-yl diphosphate synthase (flavodoxin) (371 aa).

[4Fe-4S] cluster is bound by residues C270, C273, C305, and E312.

Belongs to the IspG family. [4Fe-4S] cluster serves as cofactor.

The enzyme catalyses (2E)-4-hydroxy-3-methylbut-2-enyl diphosphate + oxidized [flavodoxin] + H2O + 2 H(+) = 2-C-methyl-D-erythritol 2,4-cyclic diphosphate + reduced [flavodoxin]. Its pathway is isoprenoid biosynthesis; isopentenyl diphosphate biosynthesis via DXP pathway; isopentenyl diphosphate from 1-deoxy-D-xylulose 5-phosphate: step 5/6. Functionally, converts 2C-methyl-D-erythritol 2,4-cyclodiphosphate (ME-2,4cPP) into 1-hydroxy-2-methyl-2-(E)-butenyl 4-diphosphate. The sequence is that of 4-hydroxy-3-methylbut-2-en-1-yl diphosphate synthase (flavodoxin) from Shewanella denitrificans (strain OS217 / ATCC BAA-1090 / DSM 15013).